A 183-amino-acid polypeptide reads, in one-letter code: Inner membrane protein YgjV (183 aa).

At 1–2 (MT) the chain is on the periplasmic side. Residues 3 to 23 (AYWLAQGVGVIAFLIGITTFF) traverse the membrane as a helical segment. Topologically, residues 24-38 (NRDERRFKKQLSVYS) are cytoplasmic. A helical transmembrane segment spans residues 39–59 (AVIGVHFFLLGTYPAGASAIL). Topologically, residues 60–71 (NAIRTLITLRTR) are periplasmic. Helical transmembrane passes span 72-92 (SLWV…AKFH) and 93-113 (HPVE…LFCC). At 114–133 (KGLTMRCVMWFSTCCWVIHN) the chain is on the periplasmic side. A helical transmembrane segment spans residues 134–154 (FWAGSIGGTMIEGSFLLMNGL). Topologically, residues 155-183 (NIIRFWRMQKRGIDPFKVEKTPSAVDERG) are cytoplasmic.

The protein localises to the cell inner membrane. The sequence is that of Inner membrane protein YgjV (ygjV) from Escherichia coli (strain K12).